A 234-amino-acid chain; its full sequence is Carboxy-S-adenosyl-L-methionine synthase (234 aa).

Residues tyrosine 35, 60–62, 109–110, asparagine 124, and arginine 191 each bind S-adenosyl-L-methionine; these read GCS and DI.

The protein belongs to the class I-like SAM-binding methyltransferase superfamily. Cx-SAM synthase family. In terms of assembly, homodimer.

It catalyses the reaction prephenate + S-adenosyl-L-methionine = carboxy-S-adenosyl-L-methionine + 3-phenylpyruvate + H2O. Catalyzes the conversion of S-adenosyl-L-methionine (SAM) to carboxy-S-adenosyl-L-methionine (Cx-SAM). The polypeptide is Carboxy-S-adenosyl-L-methionine synthase (Campylobacter fetus subsp. fetus (strain 82-40)).